We begin with the raw amino-acid sequence, 340 residues long: Glycerol-3-phosphate dehydrogenase [NAD(P)+] (340 aa).

Serine 12, tryptophan 13, and lysine 110 together coordinate NADPH. 3 residues coordinate sn-glycerol 3-phosphate: lysine 110, glycine 141, and serine 143. Alanine 145 is an NADPH binding site. The sn-glycerol 3-phosphate site is built by lysine 196, aspartate 249, serine 259, arginine 260, and asparagine 261. Lysine 196 functions as the Proton acceptor in the catalytic mechanism. Arginine 260 contributes to the NADPH binding site. 2 residues coordinate NADPH: valine 284 and glutamate 286.

Belongs to the NAD-dependent glycerol-3-phosphate dehydrogenase family.

It localises to the cytoplasm. The catalysed reaction is sn-glycerol 3-phosphate + NAD(+) = dihydroxyacetone phosphate + NADH + H(+). It catalyses the reaction sn-glycerol 3-phosphate + NADP(+) = dihydroxyacetone phosphate + NADPH + H(+). It functions in the pathway membrane lipid metabolism; glycerophospholipid metabolism. Functionally, catalyzes the reduction of the glycolytic intermediate dihydroxyacetone phosphate (DHAP) to sn-glycerol 3-phosphate (G3P), the key precursor for phospholipid synthesis. The chain is Glycerol-3-phosphate dehydrogenase [NAD(P)+] from Latilactobacillus sakei subsp. sakei (strain 23K) (Lactobacillus sakei subsp. sakei).